The chain runs to 188 residues: Probable DNA-directed RNA polymerase subunit delta (188 aa).

The region spanning 14–83 (LSMIEVARAI…GENKWGLRSW (70 aa)) is the HTH HARE-type domain. Residues 119 to 188 (EDAIDYSADD…EDEEDEEEEE (70 aa)) form a disordered region.

Belongs to the RpoE family. In terms of assembly, RNAP is composed of a core of 2 alpha, a beta and a beta' subunits. The core is associated with a delta subunit and one of several sigma factors.

Functionally, participates in both the initiation and recycling phases of transcription. In the presence of the delta subunit, RNAP displays an increased specificity of transcription, a decreased affinity for nucleic acids, and an increased efficiency of RNA synthesis because of enhanced recycling. In Streptococcus equi subsp. equi (strain 4047), this protein is Probable DNA-directed RNA polymerase subunit delta.